Here is a 124-residue protein sequence, read N- to C-terminus: Nascent polypeptide-associated complex protein (124 aa).

The 68-residue stretch at 7–74 (GLNPRKMKQM…PESRERGDSG (68 aa)) folds into the NAC-A/B domain. The tract at residues 53–124 (AQGQQTYQVV…DLAAAVQKLE (72 aa)) is disordered. Residues 74 to 93 (GSEDDSETESGGEFSEDDVE) show a composition bias toward acidic residues.

It belongs to the NAC-alpha family. As to quaternary structure, homodimer. Interacts with the ribosome. Binds ribosomal RNA.

Its function is as follows. Contacts the emerging nascent chain on the ribosome. This Natronomonas pharaonis (strain ATCC 35678 / DSM 2160 / CIP 103997 / JCM 8858 / NBRC 14720 / NCIMB 2260 / Gabara) (Halobacterium pharaonis) protein is Nascent polypeptide-associated complex protein.